Consider the following 524-residue polypeptide: GMP synthase [glutamine-hydrolyzing] (524 aa).

Residues 10 to 199 (PVLVVDFGAQ…LTEVAGLEQT (190 aa)) enclose the Glutamine amidotransferase type-1 domain. Cys87 serves as the catalytic Nucleophile. Catalysis depends on residues His173 and Glu175. Residues 200-398 (WTSANIAQQL…LGLPEEIVAR (199 aa)) form the GMPS ATP-PPase domain. Residue 228-234 (SGGVDSA) coordinates ATP.

In terms of assembly, homodimer.

The enzyme catalyses XMP + L-glutamine + ATP + H2O = GMP + L-glutamate + AMP + diphosphate + 2 H(+). It functions in the pathway purine metabolism; GMP biosynthesis; GMP from XMP (L-Gln route): step 1/1. In terms of biological role, catalyzes the synthesis of GMP from XMP. In Corynebacterium ammoniagenes (Brevibacterium ammoniagenes), this protein is GMP synthase [glutamine-hydrolyzing] (guaA).